Here is a 391-residue protein sequence, read N- to C-terminus: MREKRKYFIAERVLLIKRSKIRELFERASKMEDVISLGIGEPDFDTPKNIKEAAKRALDEGWTHYTPNAGIPELREAVVEYYKKFYGIDIEVENVIITAGAYEGTYLAFESLLERGDEVIIPDPAFVSYAEDAKVAEAKPVRIPLREENNFLPDPNELLEKISKNTRMIVINYPNNPTGATLDKELAKTIADIAEDYNIYILSDEPYEHFIYEDAKHYPMIKFAPENTILANSFSKTFAMTGWRLGFVVAPSQVIKEMTKLHAYVIGNVASFVQIAGIEALRSEESWKAVEEMKKEYNERRKIVVKRLKNMPGIKVKEPKGAFYVFPNISGTGMSSEKFSEWLLEKARVVVIPGTAFGRMGEGYVRISYATSKEKLIEAMNRIEKALEGEK.

Residues Gly40 and Asn176 each contribute to the L-aspartate site. Lys236 bears the N6-(pyridoxal phosphate)lysine mark. Arg366 is a binding site for L-aspartate.

Belongs to the class-I pyridoxal-phosphate-dependent aminotransferase family. Homodimer. Requires pyridoxal 5'-phosphate as cofactor.

It is found in the cytoplasm. The catalysed reaction is L-aspartate + 2-oxoglutarate = oxaloacetate + L-glutamate. This is Aspartate aminotransferase (aspC) from Pyrococcus horikoshii (strain ATCC 700860 / DSM 12428 / JCM 9974 / NBRC 100139 / OT-3).